Consider the following 159-residue polypeptide: Phosphopantetheine adenylyltransferase (159 aa).

Position 9 (serine 9) interacts with substrate. ATP is bound by residues 9–10 (SF) and histidine 17. Lysine 41, leucine 73, and lysine 87 together coordinate substrate. Residues 88 to 90 (GLR), glutamate 98, and 123 to 129 (YSYLSSS) each bind ATP.

This sequence belongs to the bacterial CoaD family. As to quaternary structure, homohexamer. Requires Mg(2+) as cofactor.

It is found in the cytoplasm. It catalyses the reaction (R)-4'-phosphopantetheine + ATP + H(+) = 3'-dephospho-CoA + diphosphate. It participates in cofactor biosynthesis; coenzyme A biosynthesis; CoA from (R)-pantothenate: step 4/5. Reversibly transfers an adenylyl group from ATP to 4'-phosphopantetheine, yielding dephospho-CoA (dPCoA) and pyrophosphate. The protein is Phosphopantetheine adenylyltransferase of Clostridium botulinum (strain Eklund 17B / Type B).